A 105-amino-acid polypeptide reads, in one-letter code: Large ribosomal subunit protein uL24 (105 aa).

It belongs to the universal ribosomal protein uL24 family. In terms of assembly, part of the 50S ribosomal subunit.

In terms of biological role, one of two assembly initiator proteins, it binds directly to the 5'-end of the 23S rRNA, where it nucleates assembly of the 50S subunit. One of the proteins that surrounds the polypeptide exit tunnel on the outside of the subunit. In Psychrobacter cryohalolentis (strain ATCC BAA-1226 / DSM 17306 / VKM B-2378 / K5), this protein is Large ribosomal subunit protein uL24.